Reading from the N-terminus, the 211-residue chain is 2,3-bisphosphoglycerate-dependent phosphoglycerate mutase (211 aa).

Substrate-binding positions include 9 to 16 (RHGQSDWN), 22 to 23 (TG), R61, 88 to 91 (ERDY), K99, 115 to 116 (RR), and 159 to 160 (GN). H10 serves as the catalytic Tele-phosphohistidine intermediate. The active-site Proton donor/acceptor is the E88.

Belongs to the phosphoglycerate mutase family. BPG-dependent PGAM subfamily. In terms of assembly, homodimer.

The catalysed reaction is (2R)-2-phosphoglycerate = (2R)-3-phosphoglycerate. It participates in carbohydrate degradation; glycolysis; pyruvate from D-glyceraldehyde 3-phosphate: step 3/5. In terms of biological role, catalyzes the interconversion of 2-phosphoglycerate and 3-phosphoglycerate. The sequence is that of 2,3-bisphosphoglycerate-dependent phosphoglycerate mutase from Rhizobium etli (strain CIAT 652).